Reading from the N-terminus, the 272-residue chain is Thiazole synthase (272 aa).

Catalysis depends on Lys-111, which acts as the Schiff-base intermediate with DXP. 1-deoxy-D-xylulose 5-phosphate-binding positions include Gly-172, 198 to 199 (AG), and 220 to 221 (NS). The disordered stretch occupies residues 249–272 (SGRLPRRDQASASSPTTGLVQSPQ). Residues 258–272 (ASASSPTTGLVQSPQ) are compositionally biased toward polar residues.

It belongs to the ThiG family. Homotetramer. Forms heterodimers with either ThiH or ThiS.

It is found in the cytoplasm. The enzyme catalyses [ThiS sulfur-carrier protein]-C-terminal-Gly-aminoethanethioate + 2-iminoacetate + 1-deoxy-D-xylulose 5-phosphate = [ThiS sulfur-carrier protein]-C-terminal Gly-Gly + 2-[(2R,5Z)-2-carboxy-4-methylthiazol-5(2H)-ylidene]ethyl phosphate + 2 H2O + H(+). Its pathway is cofactor biosynthesis; thiamine diphosphate biosynthesis. Functionally, catalyzes the rearrangement of 1-deoxy-D-xylulose 5-phosphate (DXP) to produce the thiazole phosphate moiety of thiamine. Sulfur is provided by the thiocarboxylate moiety of the carrier protein ThiS. In vitro, sulfur can be provided by H(2)S. This Synechococcus sp. (strain CC9605) protein is Thiazole synthase.